A 400-amino-acid polypeptide reads, in one-letter code: NADH-quinone oxidoreductase subunit D (400 aa).

It belongs to the complex I 49 kDa subunit family. NDH-1 is composed of 14 different subunits. Subunits NuoB, C, D, E, F, and G constitute the peripheral sector of the complex.

It localises to the cell inner membrane. It catalyses the reaction a quinone + NADH + 5 H(+)(in) = a quinol + NAD(+) + 4 H(+)(out). NDH-1 shuttles electrons from NADH, via FMN and iron-sulfur (Fe-S) centers, to quinones in the respiratory chain. The immediate electron acceptor for the enzyme in this species is believed to be a menaquinone. Couples the redox reaction to proton translocation (for every two electrons transferred, four hydrogen ions are translocated across the cytoplasmic membrane), and thus conserves the redox energy in a proton gradient. This is NADH-quinone oxidoreductase subunit D from Chlorobium chlorochromatii (strain CaD3).